A 568-amino-acid polypeptide reads, in one-letter code: MSGAEGNTNKRTFRAVFRTLIILITLTILALSAAILYEVTHTSNGSESNNQVFDPTDTLNAITGNIKSMIALLNQILYNAAIALPLKIDSTESVLLAAIKDLQFSNPASQNCSSGGNLLNDALYINGINQYLLSNSFAGTVGLGPLLNIPSFIPSATAPGGCTRIPSFSLTKTHWCYSHNVILAGCADSKASNQYLAMGIVEQSSADFPFFRTMRTLYLSDGINRKSCSIVAIPGGCALYCYVATKTEQEDYAATTPSELRLTFYYYNETLVERTLTIPNVTGNWATLNPAVGSGVYHLGYLAFPVYGGLIQNSAAWNSQFGSYFLPQNPAVQCSGSAEQQINTAKGSYVVNWFSGRLIQSAVLVCPLSDQLTDQCRVVLFNNSETMMGAEGRLYTIGGDLYYYQRSSSWWTASLLYKINTDFSQGLPPLIEAQWVPTYLVPRPGAQPCSAGNFCPANCITGVYADVWPMNNPFPAGSSGVNPNYLFGGAFLWADVARVNPTFYMASATQYKNTTGFPNSNQKAAYTSTTCFQNTGSKKIYCLFIIEMGSSLMGEFQIVPFLREVIIT.

Residues 1–18 (MSGAEGNTNKRTFRAVFR) lie on the Intravirion side of the membrane. The chain crosses the membrane as a helical span at residues 19 to 39 (TLIILITLTILALSAAILYEV). Residues 40 to 568 (THTSNGSESN…VPFLREVIIT (529 aa)) lie on the Virion surface side of the membrane. 2 N-linked (GlcNAc...) asparagine; by host glycosylation sites follow: Asn44 and Asn111. 3 disulfide bridges follow: Cys162–Cys186, Cys176–Cys237, and Cys228–Cys241. The tract at residues 224-229 (NRKSCS) is involved in neuraminidase activity. Asn268 and Asn280 each carry an N-linked (GlcNAc...) asparagine; by host glycan. 3 disulfides stabilise this stretch: Cys334/Cys455, Cys366/Cys376, and Cys449/Cys459. Asn382 carries an N-linked (GlcNAc...) asparagine; by host glycan. An N-linked (GlcNAc...) asparagine; by host glycan is attached at Asn513. Residues Cys531 and Cys542 are joined by a disulfide bond.

It belongs to the paramyxoviruses hemagglutinin-neuraminidase family. Homotetramer; composed of disulfide-linked homodimers.

The protein resides in the virion membrane. The protein localises to the host cell membrane. It catalyses the reaction Hydrolysis of alpha-(2-&gt;3)-, alpha-(2-&gt;6)-, alpha-(2-&gt;8)- glycosidic linkages of terminal sialic acid residues in oligosaccharides, glycoproteins, glycolipids, colominic acid and synthetic substrates.. Attaches the virus to sialic acid-containing cell receptors and thereby initiating infection. Binding of HN protein to the receptor induces a conformational change that allows the F protein to trigger virion/cell membranes fusion. Its function is as follows. Neuraminidase activity ensures the efficient spread of the virus by dissociating the mature virions from the neuraminic acid containing glycoproteins. The polypeptide is Hemagglutinin-neuraminidase (HN) (Simiiformes (SV41)).